A 72-amino-acid polypeptide reads, in one-letter code: Mitotic-spindle organizing protein 1 (72 aa).

Belongs to the MOZART1 family. In terms of assembly, part of the gamma-tubulin complex.

The protein localises to the cytoplasm. It localises to the cytoskeleton. The protein resides in the microtubule organizing center. Its subcellular location is the centrosome. It is found in the spindle. In terms of biological role, required for gamma-tubulin complex recruitment to the centrosome. The chain is Mitotic-spindle organizing protein 1 (mzt1) from Xenopus laevis (African clawed frog).